Consider the following 258-residue polypeptide: NAD kinase (258 aa).

Aspartate 44 serves as the catalytic Proton acceptor. NAD(+) is bound by residues 44 to 45, 116 to 117, aspartate 146, alanine 154, and 157 to 162; these read DG, NE, and TAYNLS.

This sequence belongs to the NAD kinase family. Requires a divalent metal cation as cofactor.

It is found in the cytoplasm. The enzyme catalyses NAD(+) + ATP = ADP + NADP(+) + H(+). Functionally, involved in the regulation of the intracellular balance of NAD and NADP, and is a key enzyme in the biosynthesis of NADP. Catalyzes specifically the phosphorylation on 2'-hydroxyl of the adenosine moiety of NAD to yield NADP. In Zymomonas mobilis subsp. mobilis (strain ATCC 31821 / ZM4 / CP4), this protein is NAD kinase.